The following is a 337-amino-acid chain: MQTRFVSPVNHDEEQDEPSVRPGLLADFIGQDSIKDALTVAITSARKRNKPLDHILFSGPPGLGKTTLAHIIAQEMNSHIETTSGPVLDRPGDLAALLTPLKDRDFLFIDEIHRLSPVIEEILYPAMEDYTIDLLIGEGPSARTIQLPLERFTLIGATTRLGLLGSPFRDRFGIILRLDLYDPSELTVIVTRSAGILGIPITPEGAAEIAGRSRGTPRIANRLLKRAYDYAIVRGTGSIDQNIANTALFALGVDQKGLDILDRRILEVIANDFDGGPVGLKTISISVGEEPRTIEDVYEPYLIRIGFLKRTPQGRMITSAARDHLGNSHTRDLTSFL.

The segment at Met-1–Val-20 is disordered. Residues Met-1–Tyr-181 form a large ATPase domain (RuvB-L) region. ATP-binding positions include Arg-21, Gly-62, Lys-65, Thr-66, Thr-67, Glu-128–Tyr-130, Arg-171, Tyr-181, and Arg-218. Residue Thr-66 participates in Mg(2+) binding. The small ATPAse domain (RuvB-S) stretch occupies residues Asp-182–Gly-252. A head domain (RuvB-H) region spans residues Gln-255–Leu-337. The DNA site is built by Arg-310 and Arg-315.

This sequence belongs to the RuvB family. As to quaternary structure, homohexamer. Forms an RuvA(8)-RuvB(12)-Holliday junction (HJ) complex. HJ DNA is sandwiched between 2 RuvA tetramers; dsDNA enters through RuvA and exits via RuvB. An RuvB hexamer assembles on each DNA strand where it exits the tetramer. Each RuvB hexamer is contacted by two RuvA subunits (via domain III) on 2 adjacent RuvB subunits; this complex drives branch migration. In the full resolvosome a probable DNA-RuvA(4)-RuvB(12)-RuvC(2) complex forms which resolves the HJ.

It is found in the cytoplasm. The catalysed reaction is ATP + H2O = ADP + phosphate + H(+). In terms of biological role, the RuvA-RuvB-RuvC complex processes Holliday junction (HJ) DNA during genetic recombination and DNA repair, while the RuvA-RuvB complex plays an important role in the rescue of blocked DNA replication forks via replication fork reversal (RFR). RuvA specifically binds to HJ cruciform DNA, conferring on it an open structure. The RuvB hexamer acts as an ATP-dependent pump, pulling dsDNA into and through the RuvAB complex. RuvB forms 2 homohexamers on either side of HJ DNA bound by 1 or 2 RuvA tetramers; 4 subunits per hexamer contact DNA at a time. Coordinated motions by a converter formed by DNA-disengaged RuvB subunits stimulates ATP hydrolysis and nucleotide exchange. Immobilization of the converter enables RuvB to convert the ATP-contained energy into a lever motion, pulling 2 nucleotides of DNA out of the RuvA tetramer per ATP hydrolyzed, thus driving DNA branch migration. The RuvB motors rotate together with the DNA substrate, which together with the progressing nucleotide cycle form the mechanistic basis for DNA recombination by continuous HJ branch migration. Branch migration allows RuvC to scan DNA until it finds its consensus sequence, where it cleaves and resolves cruciform DNA. This chain is Holliday junction branch migration complex subunit RuvB, found in Methanospirillum hungatei JF-1 (strain ATCC 27890 / DSM 864 / NBRC 100397 / JF-1).